Here is a 458-residue protein sequence, read N- to C-terminus: ATP synthase subunit beta (458 aa).

An ATP-binding site is contributed by 148-155 (GGAGVGKT).

Belongs to the ATPase alpha/beta chains family. In terms of assembly, F-type ATPases have 2 components, CF(1) - the catalytic core - and CF(0) - the membrane proton channel. CF(1) has five subunits: alpha(3), beta(3), gamma(1), delta(1), epsilon(1). CF(0) has three main subunits: a(1), b(2) and c(9-12). The alpha and beta chains form an alternating ring which encloses part of the gamma chain. CF(1) is attached to CF(0) by a central stalk formed by the gamma and epsilon chains, while a peripheral stalk is formed by the delta and b chains.

The protein localises to the cell inner membrane. The enzyme catalyses ATP + H2O + 4 H(+)(in) = ADP + phosphate + 5 H(+)(out). In terms of biological role, produces ATP from ADP in the presence of a proton gradient across the membrane. The catalytic sites are hosted primarily by the beta subunits. This chain is ATP synthase subunit beta, found in Ectopseudomonas mendocina (strain ymp) (Pseudomonas mendocina).